Reading from the N-terminus, the 105-residue chain is Large ribosomal subunit protein uL24 (105 aa).

This sequence belongs to the universal ribosomal protein uL24 family. Part of the 50S ribosomal subunit.

Functionally, one of two assembly initiator proteins, it binds directly to the 5'-end of the 23S rRNA, where it nucleates assembly of the 50S subunit. One of the proteins that surrounds the polypeptide exit tunnel on the outside of the subunit. This chain is Large ribosomal subunit protein uL24, found in Xanthomonas oryzae pv. oryzae (strain MAFF 311018).